Here is a 364-residue protein sequence, read N- to C-terminus: Glycerol dehydrogenase (364 aa).

The NAD(+) site is built by Asp37, Gly92, Lys93, Thr114, and Ser117. Asp119 provides a ligand contact to glycerol. The NAD(+) site is built by Ser123, Leu125, and Tyr129. Asp169, His252, and His269 together coordinate glycerol. 3 residues coordinate Zn(2+): Asp169, His252, and His269.

It belongs to the iron-containing alcohol dehydrogenase family. Zn(2+) serves as cofactor.

It catalyses the reaction glycerol + NAD(+) = dihydroxyacetone + NADH + H(+). It participates in polyol metabolism; glycerol fermentation; glycerone phosphate from glycerol (oxidative route): step 1/2. Catalyzes the NAD-dependent oxidation of glycerol to dihydroxyacetone (glycerone). The protein is Glycerol dehydrogenase (gldA) of Thermotoga maritima (strain ATCC 43589 / DSM 3109 / JCM 10099 / NBRC 100826 / MSB8).